The sequence spans 285 residues: Sulfur carrier protein TtuD (285 aa).

2 Rhodanese domains span residues E20 to T127 and K161 to A281. C240 is subject to Cysteine persulfide.

In terms of processing, cys-240 can accept a sulfur atom as persulfide forms from cysteine desulfurases IscS and SufS.

Its pathway is tRNA modification. Required for the efficient 2-thiolation of 5-methyluridine residue at position 54 in the T loop of tRNAs, leading to 5-methyl-2-thiouridine (m(5)s(2)U or s(2)T). TtuD is a sulfur carrier protein that has a role to direct sulfur flow from cysteine desulfurases to m(5)s(2)U synthesis in vivo. It enhances the cysteine desulfurase activity of IscS and SufS, as well as the formation of thiocarboxylated TtuB (TtuB-COSH) in the presence of these desulfurases. The polypeptide is Sulfur carrier protein TtuD (Thermus thermophilus (strain ATCC BAA-163 / DSM 7039 / HB27)).